We begin with the raw amino-acid sequence, 392 residues long: Bifunctional enzyme Fae/Hps (392 aa).

Residues Met-1–Val-161 are formaldehyde-activating enzyme. Catalysis depends on His-17, which acts as the Proton donor. Substrate is bound by residues Asp-19, Leu-48, Lys-66, Thr-68, and Gln-83. Positions Met-162–Phe-392 are 3-hexulose-6-phosphate synthase.

It in the N-terminal section; belongs to the formaldehyde-activating enzyme family. The protein in the C-terminal section; belongs to the HPS/KGPDC family. HPS subfamily.

It carries out the reaction 5,6,7,8-tetrahydromethanopterin + formaldehyde = 5,10-methylenetetrahydromethanopterin + H2O. It catalyses the reaction D-ribulose 5-phosphate + formaldehyde = D-arabino-hex-3-ulose 6-phosphate. It participates in carbohydrate biosynthesis; D-ribose 5-phosphate biosynthesis. Functionally, catalyzes the condensation of formaldehyde with tetrahydromethanopterin (H(4)MPT) to 5,10-methylenetetrahydromethanopterin. Catalyzes the reversible formation of ribulose-5-phosphate and formaldehyde from 3-hexulose-6-phosphate. The sequence is that of Bifunctional enzyme Fae/Hps from Methanothrix thermoacetophila (strain DSM 6194 / JCM 14653 / NBRC 101360 / PT) (Methanosaeta thermophila).